A 347-amino-acid polypeptide reads, in one-letter code: Fructose-1,6-bisphosphatase class 1 (347 aa).

4 residues coordinate Mg(2+): Glu-107, Asp-128, Leu-130, and Asp-131. Substrate contacts are provided by residues 131-134, Asn-224, Tyr-257, and Lys-286; that span reads DGSS. Glu-292 lines the Mg(2+) pocket.

This sequence belongs to the FBPase class 1 family. In terms of assembly, homotetramer. Mg(2+) is required as a cofactor.

Its subcellular location is the cytoplasm. It catalyses the reaction beta-D-fructose 1,6-bisphosphate + H2O = beta-D-fructose 6-phosphate + phosphate. It functions in the pathway carbohydrate biosynthesis; gluconeogenesis. This Sorangium cellulosum (strain So ce56) (Polyangium cellulosum (strain So ce56)) protein is Fructose-1,6-bisphosphatase class 1.